The primary structure comprises 600 residues: Alpha pinene synthase, chloroplastic (600 aa).

Positions 1-27 (MSSISMHAGPLNISAANNHHPSWDRRV) are disordered. The N-terminal 31 residues, 1–31 (MSSISMHAGPLNISAANNHHPSWDRRVSKPR), are a transit peptide targeting the chloroplast. The Mg(2+) site is built by aspartate 354, aspartate 358, aspartate 498, and glutamate 506. A DDXXD motif motif is present at residues 354 to 358 (DDVYD).

This sequence belongs to the terpene synthase family. Tpsa subfamily. Mg(2+) is required as a cofactor. Mn(2+) serves as cofactor. In terms of tissue distribution, expressed at low levels in leaves.

Its subcellular location is the plastid. The protein resides in the chloroplast. It carries out the reaction (2E)-geranyl diphosphate = alpha-pinene + diphosphate. It participates in secondary metabolite biosynthesis; terpenoid biosynthesis. Its function is as follows. Monoterpene synthase involved in the biosynthesis of volatile compounds widely used in aromatherapy and folk medicine, and present in culinary herbs. Mediates the conversion of (2E)-geranyl diphosphate (GPP) into alpha-pinene and, as minor compounds, into alpha-phellandrene, limonene and alpha-terpinolene. This Lavandula viridis (Green lavender) protein is Alpha pinene synthase, chloroplastic.